Consider the following 767-residue polypeptide: Two-component response regulator-like PRR73 (767 aa).

Positions 1–64 (MGSACEAGTD…EPQQTDEQKE (64 aa)) are disordered. The Response regulatory domain occupies 82-200 (RVLLVENDDS…ELKNLWQHVW (119 aa)). Residues 205 to 214 (SSSGSGSESG) are compositionally biased toward low complexity. Disordered stretches follow at residues 205-272 (SSSG…QSSW), 312-388 (RWLP…NEPT), 476-546 (ASNQ…RGKV), 646-701 (ANYS…SGSG), and 727-767 (NFGK…DEDR). Residues 238–252 (DNEDDDDNDEDDDDL) are compositionally biased toward acidic residues. Composition is skewed to polar residues over residues 263–272 (DNGSGTQSSW), 343–361 (RNSSMEYQSSPREMSVNPT), and 488–497 (CSPQDNSSEA). A compositionally biased stretch (low complexity) spans 518–531 (GSNGSSNNNDMGSS). The span at 532 to 543 (TKNAITKPSSNR) shows a compositional bias: polar residues. Gly residues predominate over residues 689–700 (GAGGGNGSGSGS). The CCT domain occupies 712-754 (REAALNKFRQKRKVRNFGKKVRYQSRKRLAEQRPRIRGQFVRQ). A compositionally biased stretch (basic residues) spans 727–738 (NFGKKVRYQSRK).

It belongs to the ARR-like family.

The protein resides in the nucleus. Functionally, controls photoperiodic flowering response. Seems to be one of the component of the circadian clock. Expression of several members of the ARR-like family is controlled by circadian rhythm. The particular coordinated sequential expression of PRR73, PRR37, PRR95, PRR59 and PPR1 result to circadian waves that may be at the basis of the endogenous circadian clock. The polypeptide is Two-component response regulator-like PRR73 (PRR73) (Oryza sativa subsp. japonica (Rice)).